The chain runs to 199 residues: MIARDDVTGLILAGGRGSRMGGTDKGLQPLHGTPMAMHTMMRLTPQVGGLMINANRNLAAYESFGVPVYTDSVPDFAGPLAGMLAGLEQCATPWMVTAPCDSPFLPTDLVARLAQAIEAEGAELAIPVTLDPDGRRQTQPVFCLMPVSALDSLVAYLSGGGRKIETWAASHRLAEVLFDDAAAFANINTLDELRAHEAR.

Residues L12–G14, K25, N53, D71, and D101 each bind GTP. A Mg(2+)-binding site is contributed by D101.

Belongs to the MobA family. Monomer. Mg(2+) serves as cofactor.

Its subcellular location is the cytoplasm. It catalyses the reaction Mo-molybdopterin + GTP + H(+) = Mo-molybdopterin guanine dinucleotide + diphosphate. In terms of biological role, transfers a GMP moiety from GTP to Mo-molybdopterin (Mo-MPT) cofactor (Moco or molybdenum cofactor) to form Mo-molybdopterin guanine dinucleotide (Mo-MGD) cofactor. The sequence is that of Molybdenum cofactor guanylyltransferase from Cupriavidus taiwanensis (strain DSM 17343 / BCRC 17206 / CCUG 44338 / CIP 107171 / LMG 19424 / R1) (Ralstonia taiwanensis (strain LMG 19424)).